Reading from the N-terminus, the 201-residue chain is Glycerol-3-phosphate acyltransferase (201 aa).

The next 6 membrane-spanning stretches (helical) occupy residues 10 to 30 (MLIGALIFGYVLGSIPFGLIL), 60 to 80 (LAAATLILDALKGTAAALIAA), 86 to 106 (AAIAAGFGAFIGHLFPVWIGF), 116 to 136 (LGVLIGLAWAGALVFAAAWIV), 139 to 159 (LLTRYSSLSALVASLVVPIAL), and 166 to 186 (ALAALFAIMTVIVFIKHRANI).

It belongs to the PlsY family. Probably interacts with PlsX.

It localises to the cell inner membrane. It carries out the reaction an acyl phosphate + sn-glycerol 3-phosphate = a 1-acyl-sn-glycero-3-phosphate + phosphate. The protein operates within lipid metabolism; phospholipid metabolism. Functionally, catalyzes the transfer of an acyl group from acyl-phosphate (acyl-PO(4)) to glycerol-3-phosphate (G3P) to form lysophosphatidic acid (LPA). This enzyme utilizes acyl-phosphate as fatty acyl donor, but not acyl-CoA or acyl-ACP. The protein is Glycerol-3-phosphate acyltransferase of Brucella suis (strain ATCC 23445 / NCTC 10510).